The chain runs to 144 residues: Large ribosomal subunit protein uL15 (144 aa).

Residues 1-44 (MNLNELQPAAGSRHVRNRVGRGTSSGNGKTSGRGQKGQKARGKV) form a disordered region. The segment covering 23–35 (TSSGNGKTSGRGQ) has biased composition (gly residues).

Belongs to the universal ribosomal protein uL15 family. As to quaternary structure, part of the 50S ribosomal subunit.

Binds to the 23S rRNA. This Leuconostoc mesenteroides subsp. mesenteroides (strain ATCC 8293 / DSM 20343 / BCRC 11652 / CCM 1803 / JCM 6124 / NCDO 523 / NBRC 100496 / NCIMB 8023 / NCTC 12954 / NRRL B-1118 / 37Y) protein is Large ribosomal subunit protein uL15.